Here is a 222-residue protein sequence, read N- to C-terminus: Fibrillarin-like rRNA/tRNA 2'-O-methyltransferase (222 aa).

Residues 86–87 (TT), 104–105 (EV), 129–130 (DA), and 149–152 (DISQ) contribute to the S-adenosyl-L-methionine site.

Belongs to the methyltransferase superfamily. Fibrillarin family. In terms of assembly, interacts with nop5. Component of box C/D small ribonucleoprotein (sRNP) particles that contain rpl7ae, FlpA and nop5, plus a guide RNA.

Functionally, involved in pre-rRNA and tRNA processing. Utilizes the methyl donor S-adenosyl-L-methionine to catalyze the site-specific 2'-hydroxyl methylation of ribose moieties in rRNA and tRNA. Site specificity is provided by a guide RNA that base pairs with the substrate. Methylation occurs at a characteristic distance from the sequence involved in base pairing with the guide RNA. This chain is Fibrillarin-like rRNA/tRNA 2'-O-methyltransferase, found in Thermoplasma volcanium (strain ATCC 51530 / DSM 4299 / JCM 9571 / NBRC 15438 / GSS1).